The following is a 374-amino-acid chain: Methionine import ATP-binding protein MetN 2 (374 aa).

The ABC transporter domain occupies 32-271 (VRFVGLGKTY…PQHEVSQTLL (240 aa)). 68–75 (GRSGAGKS) contacts ATP.

It belongs to the ABC transporter superfamily. Methionine importer (TC 3.A.1.24) family. In terms of assembly, the complex is composed of two ATP-binding proteins (MetN), two transmembrane proteins (MetI) and a solute-binding protein (MetQ).

It localises to the cell inner membrane. The enzyme catalyses L-methionine(out) + ATP + H2O = L-methionine(in) + ADP + phosphate + H(+). It carries out the reaction D-methionine(out) + ATP + H2O = D-methionine(in) + ADP + phosphate + H(+). Part of the ABC transporter complex MetNIQ involved in methionine import. Responsible for energy coupling to the transport system. In Pseudomonas fluorescens (strain Pf0-1), this protein is Methionine import ATP-binding protein MetN 2.